We begin with the raw amino-acid sequence, 974 residues long: Toxin subunit YenC1 (974 aa).

RHS repeat units lie at residues 165 to 179 (AGQC…GLNQ), 290 to 304 (GVLT…TQRL), 322 to 336 (FQDL…GNVL), 354 to 368 (VPEN…YQLV), 398 to 412 (NYIR…GNLM), 490 to 504 (SDSE…SQRV), 570 to 584 (NDEL…IGSS), 596 to 610 (SQEE…AVWM), and 630 to 644 (DATG…YYQP). An RHS-repeat associated core domain region spans residues 600 to 680 (YYPYGGTAVW…PIVLHDPDGL (81 aa)). The segment at 699 to 940 (ISSLKGTGPF…GEVSASTLLE (242 aa)) is cytotoxic necrotising factor domain.

This sequence belongs to the RHS family. Semipurified toxin complex consists of at least YenA1-YenA2-YenB-YenC1-YenC2-Chi1-Chi2. The Yen-TC:K9 subcomplex is about 26 nm tall and 22 nm in diameter with 5-fold symmetry and 5 copies of YenA1, YenA2, Chi1 and Chi2; the chitinase subunits may be solvent accessible on the exterior the complex. The Yen-TC:K9 subcomplex has no insecticidal activity. The native complex with additional YenB, YenC1 and YenC2 subunits is 16 nm taller and is insecticidal; the toxicity-conferring subunits are present at about 1 copy each.

Its subcellular location is the secreted. Toxin complex is secreted when grown at 25 degrees Celsius or less; at higher temperatures the proteins are present intracellularly but not secreted. Part of an orally active toxin complex (TC) with strong insecticidal effects on larvae of the Coleoptera Costelytra zealandica, Acrossidius tasmania and Adoryphorus couloni and some Lepidoptera larvae. The TC has an endochitinase activity. The polypeptide is Toxin subunit YenC1 (Yersinia entomophaga).